We begin with the raw amino-acid sequence, 936 residues long: Protein SIEL (936 aa).

Interacts with SHR, MGP, SCR, JKD, CPC, TMO7 and AGL21, but not with LFY or STM.

It localises to the nucleus. The protein localises to the endosome. It is found in the cytoplasm. Its subcellular location is the cell cortex. In terms of biological role, intracellular shuttle that promotes movement of SHR from the stele into the endodermis. Required for SHR association to endosomes and localization, and for intercellular movement of SHR. This chain is Protein SIEL, found in Arabidopsis thaliana (Mouse-ear cress).